The sequence spans 388 residues: Succinate--CoA ligase [ADP-forming] subunit beta (388 aa).

The region spanning Lys9 to His244 is the ATP-grasp domain. Residues Lys46, Gly53–Gly55, Glu99, Thr102, and Glu107 contribute to the ATP site. Mg(2+) is bound by residues Asn199 and Asp213. Substrate contacts are provided by residues Asn264 and Gly321 to Val323.

This sequence belongs to the succinate/malate CoA ligase beta subunit family. Heterotetramer of two alpha and two beta subunits. Mg(2+) serves as cofactor.

It catalyses the reaction succinate + ATP + CoA = succinyl-CoA + ADP + phosphate. The enzyme catalyses GTP + succinate + CoA = succinyl-CoA + GDP + phosphate. It participates in carbohydrate metabolism; tricarboxylic acid cycle; succinate from succinyl-CoA (ligase route): step 1/1. Succinyl-CoA synthetase functions in the citric acid cycle (TCA), coupling the hydrolysis of succinyl-CoA to the synthesis of either ATP or GTP and thus represents the only step of substrate-level phosphorylation in the TCA. The beta subunit provides nucleotide specificity of the enzyme and binds the substrate succinate, while the binding sites for coenzyme A and phosphate are found in the alpha subunit. The polypeptide is Succinate--CoA ligase [ADP-forming] subunit beta (Shewanella halifaxensis (strain HAW-EB4)).